Reading from the N-terminus, the 393-residue chain is Ubiquitin-like modifier-activating enzyme 5 (393 aa).

The ATP site is built by glycine 75, aspartate 96, lysine 119, asparagine 142, and asparagine 175. Residues cysteine 217 and cysteine 220 each coordinate Zn(2+). The active-site Glycyl thioester intermediate is the cysteine 241. Zn(2+)-binding residues include cysteine 294 and cysteine 299.

The protein belongs to the ubiquitin-activating E1 family. UBA5 subfamily.

In terms of biological role, E1-like enzyme which activates UFM1. This Bombyx mori (Silk moth) protein is Ubiquitin-like modifier-activating enzyme 5.